Reading from the N-terminus, the 165-residue chain is Endoribonuclease YbeY (165 aa).

The Zn(2+) site is built by H126, H130, and H136.

The protein belongs to the endoribonuclease YbeY family. Zn(2+) is required as a cofactor.

Its subcellular location is the cytoplasm. Functionally, single strand-specific metallo-endoribonuclease involved in late-stage 70S ribosome quality control and in maturation of the 3' terminus of the 16S rRNA. The polypeptide is Endoribonuclease YbeY (Ruegeria pomeroyi (strain ATCC 700808 / DSM 15171 / DSS-3) (Silicibacter pomeroyi)).